Consider the following 761-residue polypeptide: Zinc finger protein 711 (761 aa).

C2H2-type zinc fingers lie at residues 383-408, 414-436, 476-499, 505-527, and 533-556; these read YPCHICGKKFKSRGFLKRHMKNHPDH, YQCTDCEFTTNKKVSFHNHLESH, HKCKYCEYETAEQGLLNRHLLAVH, HVCVECAKGFRHPSELKKHMRTH, and FHCQHCEFSCADQSNLKTHIKSKH. The segment at 562-584 adopts a C2H2-type 6; atypical zinc-finger fold; sequence FKCGHCPQAFADDKELQRHAEIF. C564, C567, and H580 together coordinate Zn(2+). 6 C2H2-type zinc fingers span residues 590–613, 619–641, 647–670, 676–698, 704–727, and 733–755; these read HQCPHCEHKSTNSSDLKRHIISVH, HKCDVCEKGFHRPSELKKHSETH, HQCRHCDFKTLDPFTLSRHILSVH, FKCKRCKRGFRHQNELKKHMKTH, YQCQYCEYNTTDASGFKRHVISIH, and HRCDYCKKGFRRPSEKNQHIMRH.

The protein belongs to the krueppel C2H2-type zinc-finger protein family. In terms of tissue distribution, present in ovary and brain but not in other tissues (at protein level).

The protein localises to the nucleus. The protein resides in the cytoplasm. Transcription regulator required for brain development. Probably acts as a transcription factor that binds to the promoter of target genes, leading to activate their expression. This chain is Zinc finger protein 711 (znf711), found in Danio rerio (Zebrafish).